Here is a 36-residue protein sequence, read N- to C-terminus: Photosystem II reaction center protein X (36 aa).

Residues 9–29 (LWSIFWGGVVVALGAAALTAI) form a helical membrane-spanning segment.

It belongs to the PsbX family. Type 1 subfamily. As to quaternary structure, PSII is composed of 1 copy each of membrane proteins PsbA, PsbB, PsbC, PsbD, PsbE, PsbF, PsbH, PsbI, PsbJ, PsbK, PsbL, PsbM, PsbT, PsbX, Psb30/Ycf12, peripheral proteins PsbO, CyanoQ (PsbQ), PsbU, PsbV and a large number of cofactors. It forms dimeric complexes.

It localises to the cell inner membrane. Its function is as follows. Involved in the binding and/or turnover of quinones at the Q(B) site of photosystem II (PSII). PSII is a light-driven water plastoquinone oxidoreductase, using light energy to abstract electrons from H(2)O, generating a proton gradient subsequently used for ATP formation. This Gloeobacter violaceus (strain ATCC 29082 / PCC 7421) protein is Photosystem II reaction center protein X.